An 828-amino-acid chain; its full sequence is DNA gyrase subunit A (828 aa).

The 464-residue stretch at 38-501 folds into the Topo IIA-type catalytic domain; it reads LPDARDGLKP…SYESIDTEDL (464 aa). The O-(5'-phospho-DNA)-tyrosine intermediate role is filled by Tyr-126. The GyrA-box signature appears at 528-534; the sequence is QNRGGKG.

It belongs to the type II topoisomerase GyrA/ParC subunit family. Heterotetramer, composed of two GyrA and two GyrB chains. In the heterotetramer, GyrA contains the active site tyrosine that forms a transient covalent intermediate with DNA, while GyrB binds cofactors and catalyzes ATP hydrolysis.

The protein localises to the cytoplasm. The catalysed reaction is ATP-dependent breakage, passage and rejoining of double-stranded DNA.. A type II topoisomerase that negatively supercoils closed circular double-stranded (ds) DNA in an ATP-dependent manner to modulate DNA topology and maintain chromosomes in an underwound state. Negative supercoiling favors strand separation, and DNA replication, transcription, recombination and repair, all of which involve strand separation. Also able to catalyze the interconversion of other topological isomers of dsDNA rings, including catenanes and knotted rings. Type II topoisomerases break and join 2 DNA strands simultaneously in an ATP-dependent manner. This is DNA gyrase subunit A from Helicobacter pylori (strain J99 / ATCC 700824) (Campylobacter pylori J99).